The primary structure comprises 570 residues: Zeta-carotene desaturase, chloroplastic/chromoplastic (570 aa).

Low complexity predominate over residues 1–16; it reads MASVAATTTLAPALAP. The segment at 1–33 is disordered; that stretch reads MASVAATTTLAPALAPRRARPGTGLVPPRRASA.

It belongs to the zeta carotene desaturase family. NAD(+) serves as cofactor. The cofactor is NADP(+). It depends on FAD as a cofactor.

The protein resides in the plastid. It is found in the chloroplast. The protein localises to the chromoplast. It catalyses the reaction 9,9'-di-cis-zeta-carotene + 2 a quinone = 7,7',9,9'-tetra-cis-lycopene + 2 a quinol. It functions in the pathway carotenoid biosynthesis; lycopene biosynthesis. Functionally, catalyzes the conversion of zeta-carotene to lycopene via the intermediary of neurosporene. It carries out two consecutive desaturations (introduction of double bonds) at positions C-7 and C-7'. The chain is Zeta-carotene desaturase, chloroplastic/chromoplastic (ZDS1) from Zea mays (Maize).